Reading from the N-terminus, the 214-residue chain is Ependymin (214 aa).

An N-terminal signal peptide occupies residues M1–A20. N-linked (GlcNAc...) asparagine glycans are attached at residues N70 and N93.

This sequence belongs to the ependymin family. In terms of assembly, forms disulfide-linked dimers. Post-translationally, binds calcium through the terminal sialic acids.

Its subcellular location is the secreted. Its function is as follows. May play a role in neural plasticity. May be involved during axon regeneration. This chain is Ependymin (epd), found in Notemigonus crysoleucas (Golden shiner).